Reading from the N-terminus, the 256-residue chain is Thioredoxin-dependent peroxide reductase, mitochondrial (256 aa).

The transit peptide at 1-61 (MAAAVGRLLR…KLFSTSSSYH (61 aa)) directs the protein to the mitochondrion. A Thioredoxin domain is found at 63 to 221 (PAVTQHAPYF…TLRLVKAFQY (159 aa)). N6-succinyllysine is present on K83. N6-acetyllysine; alternate is present on K91. K91 is modified (N6-succinyllysine; alternate). C108 acts as the Cysteine sulfenic acid (-SOH) intermediate in catalysis. T146 bears the Phosphothreonine mark.

It belongs to the peroxiredoxin family. AhpC/Prx1 subfamily. As to quaternary structure, homodimer; disulfide-linked, upon oxidation. 6 homodimers assemble to form a ring-like dodecamer. Interacts with NEK6. Interacts with LRRK2. Interacts with MAP3K13. Interacts with RPS6KC1 (via PX domain). Post-translationally, phosphorylated by LRRK2; phosphorylation reduces perodixase activity. In terms of processing, the enzyme can be inactivated by further oxidation of the cysteine sulfenic acid (C(P)-SOH) to sulphinic acid (C(P)-SO2H) and sulphonic acid (C(P)-SO3H) instead of its condensation to a disulfide bond. S-palmitoylated.

The protein resides in the mitochondrion. It localises to the cytoplasm. Its subcellular location is the early endosome. It catalyses the reaction a hydroperoxide + [thioredoxin]-dithiol = an alcohol + [thioredoxin]-disulfide + H2O. Thiol-specific peroxidase that catalyzes the reduction of hydrogen peroxide and organic hydroperoxides to water and alcohols, respectively. Plays a role in cell protection against oxidative stress by detoxifying peroxides. Acts synergistically with MAP3K13 to regulate the activation of NF-kappa-B in the cytosol. Required for the maintenance of physical strength. In Pongo abelii (Sumatran orangutan), this protein is Thioredoxin-dependent peroxide reductase, mitochondrial (PRDX3).